We begin with the raw amino-acid sequence, 511 residues long: Histidine ammonia-lyase (511 aa).

A cross-link (5-imidazolinone (Ala-Gly)) is located at residues 142-144 (ASG). The residue at position 143 (S143) is a 2,3-didehydroalanine (Ser).

This sequence belongs to the PAL/histidase family. Contains an active site 4-methylidene-imidazol-5-one (MIO), which is formed autocatalytically by cyclization and dehydration of residues Ala-Ser-Gly.

Its subcellular location is the cytoplasm. The enzyme catalyses L-histidine = trans-urocanate + NH4(+). It functions in the pathway amino-acid degradation; L-histidine degradation into L-glutamate; N-formimidoyl-L-glutamate from L-histidine: step 1/3. This is Histidine ammonia-lyase from Rhizobium rhizogenes (strain K84 / ATCC BAA-868) (Agrobacterium radiobacter).